Consider the following 406-residue polypeptide: uncharacterized protein (406 aa).

Positions 1 to 36 are disordered; it reads MDRVRSLIGNRRGRRHNRQHPPYPHSGSPSTVNLLG.

This sequence to yeast YMR316w.

This is an uncharacterized protein from Saccharomyces cerevisiae (strain ATCC 204508 / S288c) (Baker's yeast).